We begin with the raw amino-acid sequence, 430 residues long: Aspartate--tRNA(Asp/Asn) ligase (430 aa).

Glu-168 contributes to the L-aspartate binding site. The interval 190–193 (QLYK) is aspartate. L-aspartate is bound at residue Arg-212. ATP-binding positions include 212–214 (RAE), 220–222 (RHL), and Glu-353. Positions 353 and 356 each coordinate Mg(2+). L-aspartate contacts are provided by Ser-356 and Arg-360. An ATP-binding site is contributed by 401–404 (GAER).

The protein belongs to the class-II aminoacyl-tRNA synthetase family. Type 2 subfamily. In terms of assembly, homodimer. It depends on Mg(2+) as a cofactor.

It localises to the cytoplasm. The enzyme catalyses tRNA(Asx) + L-aspartate + ATP = L-aspartyl-tRNA(Asx) + AMP + diphosphate. In terms of biological role, aspartyl-tRNA synthetase with relaxed tRNA specificity since it is able to aspartylate not only its cognate tRNA(Asp) but also tRNA(Asn). Reaction proceeds in two steps: L-aspartate is first activated by ATP to form Asp-AMP and then transferred to the acceptor end of tRNA(Asp/Asn). In Archaeoglobus fulgidus (strain ATCC 49558 / DSM 4304 / JCM 9628 / NBRC 100126 / VC-16), this protein is Aspartate--tRNA(Asp/Asn) ligase.